We begin with the raw amino-acid sequence, 392 residues long: MARSDYLFTSESVSEGHPDKVCDRISDTVVDAYLAEMPEARLGVETLATTNRIVIAGEVRGPDSVTFARLEELTRAAVKDIGYEQDGFHWKNADVAIYLHAQSADIAQGVDASGNKDEGAGDQGIMFGYATDETPALMPAPIYYAHKILKDLADARKGRVGEAAKLGPDAKSQVTVRYEGGRPVEATQIVLSTQHLDESLDSQGVRAIVEPYIRAALPGSWVTDRTVWHVNPTGKFVIGGPDGDCGLTGRKIIVDTYGGAAPHGGGAFSGKDPTKVDRSAAYAARYLAKNVVAAGLSRRATIQLAYAIGVAKPLSIYVDLHGTGRVEEAKLEKVLGEILDLSPRGIRTHLGLNKPIYARTSAYGHFGREPDRDGGFSWEKTDLVATLKSALA.

ATP is bound at residue His-17. Residue Asp-19 participates in Mg(2+) binding. K(+) is bound at residue Glu-45. The L-methionine site is built by Glu-58 and Gln-102. Residues 102–112 (QSADIAQGVDA) form a flexible loop region. Residues 169-171 (DAK), 235-236 (KF), Asp-244, 250-251 (RK), Ala-267, and Lys-271 contribute to the ATP site. Asp-244 provides a ligand contact to L-methionine. Lys-275 serves as a coordination point for L-methionine.

This sequence belongs to the AdoMet synthase family. As to quaternary structure, homotetramer; dimer of dimers. Requires Mg(2+) as cofactor. K(+) serves as cofactor.

Its subcellular location is the cytoplasm. The enzyme catalyses L-methionine + ATP + H2O = S-adenosyl-L-methionine + phosphate + diphosphate. The protein operates within amino-acid biosynthesis; S-adenosyl-L-methionine biosynthesis; S-adenosyl-L-methionine from L-methionine: step 1/1. Catalyzes the formation of S-adenosylmethionine (AdoMet) from methionine and ATP. The overall synthetic reaction is composed of two sequential steps, AdoMet formation and the subsequent tripolyphosphate hydrolysis which occurs prior to release of AdoMet from the enzyme. In Methylobacterium sp. (strain 4-46), this protein is S-adenosylmethionine synthase.